The following is a 723-amino-acid chain: Probable G-protein coupled receptor 149 (723 aa).

At 1 to 31 the chain is on the extracellular side; that stretch reads MSVMPSNLSLNGTSFFAENHSIMDKPNEQRT. Asparagine 7, asparagine 11, and asparagine 19 each carry an N-linked (GlcNAc...) asparagine glycan. A helical membrane pass occupies residues 32 to 52; it reads LNVFLFCSTFIIAFTVLLGSI. Over 53–69 the chain is Cytoplasmic; the sequence is YSLVSLLKLQNKSTISM. Residues 70–90 form a helical membrane-spanning segment; it reads IVTSLSIDDLISIVPVIIFML. Over 91–106 the chain is Extracellular; that stretch reads TQWSSDALPQPLCTTS. Residues cysteine 103 and cysteine 181 are joined by a disulfide bond. The helical transmembrane segment at 107-127 threads the bilayer; sequence ALIYLFQGISSNLKGSLIVSY. Topologically, residues 128–148 are cytoplasmic; that stretch reads NFYSINKTETMNCSASKRRVS. Residues 149-169 traverse the membrane as a helical segment; sequence MVWAILSIWIVSLLICILPLC. Residues 170–188 are Extracellular-facing; that stretch reads GWGKYIPTTWGCFTDHASS. The chain crosses the membrane as a helical span at residues 189–209; sequence YILFLFIVYSLCFCLLTVLSV. Over 210-306 the chain is Cytoplasmic; sequence PLTYQLLCSD…SFTVGFAQKR (97 aa). A helical membrane pass occupies residues 307–327; the sequence is FSLILALTKVILWLPMMIQMV. At 328-338 the chain is on the extracellular side; it reads VQHITGYQSFS. The helical transmembrane segment at 339–359 threads the bilayer; the sequence is FETLSFLLTLLAATVTPVFVL. At 360-723 the chain is on the cytoplasmic side; it reads SEHWIHLPCG…RKREEDGNSN (364 aa). The tract at residues 451-513 is disordered; sequence TTDSARPGPA…ERRLSHEEGH (63 aa). Basic and acidic residues predominate over residues 501–513; it reads EGPERRLSHEEGH.

It belongs to the G-protein coupled receptor 1 family. In terms of tissue distribution, specific expression in peripheral nervous system, including nerve growth factor-dependent sensory and sympathetic neurons, as well as enteric neurons.

The protein localises to the cell membrane. In terms of biological role, orphan receptor. The polypeptide is Probable G-protein coupled receptor 149 (GPR149) (Gallus gallus (Chicken)).